A 107-amino-acid chain; its full sequence is Large ribosomal subunit protein bL21 (107 aa).

The protein belongs to the bacterial ribosomal protein bL21 family. Part of the 50S ribosomal subunit. Contacts protein L20.

Functionally, this protein binds to 23S rRNA in the presence of protein L20. The chain is Large ribosomal subunit protein bL21 from Buchnera aphidicola subsp. Schizaphis graminum (strain Sg).